Consider the following 277-residue polypeptide: Phosphonates import ATP-binding protein PhnC 2 (277 aa).

Positions 5-253 (IHVQGLNKTF…FLNDLYGADA (249 aa)) constitute an ABC transporter domain. 37–44 (GASGSGKS) provides a ligand contact to ATP.

The protein belongs to the ABC transporter superfamily. Phosphonates importer (TC 3.A.1.9.1) family. The complex is composed of two ATP-binding proteins (PhnC), two transmembrane proteins (PhnE) and a solute-binding protein (PhnD).

The protein localises to the cell inner membrane. The enzyme catalyses phosphonate(out) + ATP + H2O = phosphonate(in) + ADP + phosphate + H(+). Part of the ABC transporter complex PhnCDE involved in phosphonates import. Responsible for energy coupling to the transport system. The sequence is that of Phosphonates import ATP-binding protein PhnC 2 from Pseudomonas savastanoi pv. phaseolicola (strain 1448A / Race 6) (Pseudomonas syringae pv. phaseolicola (strain 1448A / Race 6)).